We begin with the raw amino-acid sequence, 334 residues long: Ornithine carbamoyltransferase (334 aa).

Residues 57–60, Q84, R108, and 135–138 each bind carbamoyl phosphate; these read STRT and HPTQ. Residues N168, D232, and 236–237 each bind L-ornithine; that span reads SM. Residues 274–275 and R321 each bind carbamoyl phosphate; that span reads CL.

It belongs to the aspartate/ornithine carbamoyltransferase superfamily. OTCase family.

It localises to the cytoplasm. It catalyses the reaction carbamoyl phosphate + L-ornithine = L-citrulline + phosphate + H(+). The protein operates within amino-acid degradation; L-arginine degradation via ADI pathway; carbamoyl phosphate from L-arginine: step 2/2. Its function is as follows. Reversibly catalyzes the transfer of the carbamoyl group from carbamoyl phosphate (CP) to the N(epsilon) atom of ornithine (ORN) to produce L-citrulline. The sequence is that of Ornithine carbamoyltransferase from Haemophilus influenzae (strain PittGG).